A 338-amino-acid polypeptide reads, in one-letter code: Lipoate-protein ligase A (338 aa).

Residues 29 to 216 (PATQRVLFLW…AFFAHYGERV (188 aa)) enclose the BPL/LPL catalytic domain. Residues Arg71, 76–79 (GAVF), and Lys134 contribute to the ATP site. Lys134 provides a ligand contact to (R)-lipoate.

The protein belongs to the LplA family. As to quaternary structure, monomer.

The protein localises to the cytoplasm. It catalyses the reaction L-lysyl-[lipoyl-carrier protein] + (R)-lipoate + ATP = N(6)-[(R)-lipoyl]-L-lysyl-[lipoyl-carrier protein] + AMP + diphosphate + H(+). It functions in the pathway protein modification; protein lipoylation via exogenous pathway; protein N(6)-(lipoyl)lysine from lipoate: step 1/2. The protein operates within protein modification; protein lipoylation via exogenous pathway; protein N(6)-(lipoyl)lysine from lipoate: step 2/2. Functionally, catalyzes both the ATP-dependent activation of exogenously supplied lipoate to lipoyl-AMP and the transfer of the activated lipoyl onto the lipoyl domains of lipoate-dependent enzymes. The polypeptide is Lipoate-protein ligase A (Shigella sonnei (strain Ss046)).